The primary structure comprises 169 residues: Neudesin (169 aa).

Positions 1 to 28 (MAGPAPGRRLVALALIVALAVGLPTAGA) are cleaved as a signal peptide. Residues 41–126 (VRLFTEEELA…EELESLDDVF (86 aa)) enclose the Cytochrome b5 heme-binding domain. Residue Lys-133 is modified to N6-acetyllysine. Residues 148–169 (DGSPNLDFKPEDQPHFDIKDEF) are disordered. Residues 155–169 (FKPEDQPHFDIKDEF) show a composition bias toward basic and acidic residues.

This sequence belongs to the cytochrome b5 family. MAPR subfamily. Interacts with PINK1 and PARK7.

Its subcellular location is the secreted. It is found in the extracellular space. The protein resides in the mitochondrion. The protein localises to the endoplasmic reticulum. Acts as a neurotrophic factor in postnatal mature neurons enhancing neuronal survival. Promotes cell proliferation and neurogenesis in undifferentiated neural progenitor cells at the embryonic stage and inhibits differentiation of astrocytes. Its neurotrophic activity is exerted via MAPK1/ERK2, MAPK3/ERK1 and AKT1/AKT pathways. Neurotrophic activity is enhanced by binding to heme. Also acts as an anorexigenic neurotrophic factor that contributes to energy balance. The polypeptide is Neudesin (NENF) (Bos taurus (Bovine)).